Here is a 44-residue protein sequence, read N- to C-terminus: Antibacterial protein 3 homolog (44 aa).

This sequence belongs to the staphylococcal hemolytic protein family.

It is found in the secreted. Its function is as follows. Has hemolytic activity and also inhibits the growth of gonococci. This Staphylococcus haemolyticus (strain JCSC1435) protein is Antibacterial protein 3 homolog.